Here is a 264-residue protein sequence, read N- to C-terminus: S-adenosylmethionine decarboxylase proenzyme (264 aa).

Serine 112 (schiff-base intermediate with substrate; via pyruvic acid) is an active-site residue. A Pyruvic acid (Ser); by autocatalysis modification is found at serine 112. The Proton acceptor; for processing activity role is filled by histidine 117. The Proton donor; for catalytic activity role is filled by cysteine 140.

It belongs to the prokaryotic AdoMetDC family. Type 2 subfamily. As to quaternary structure, heterooctamer of four alpha and four beta chains arranged as a tetramer of alpha/beta heterodimers. Requires pyruvate as cofactor. Is synthesized initially as an inactive proenzyme. Formation of the active enzyme involves a self-maturation process in which the active site pyruvoyl group is generated from an internal serine residue via an autocatalytic post-translational modification. Two non-identical subunits are generated from the proenzyme in this reaction, and the pyruvate is formed at the N-terminus of the alpha chain, which is derived from the carboxyl end of the proenzyme. The post-translation cleavage follows an unusual pathway, termed non-hydrolytic serinolysis, in which the side chain hydroxyl group of the serine supplies its oxygen atom to form the C-terminus of the beta chain, while the remainder of the serine residue undergoes an oxidative deamination to produce ammonia and the pyruvoyl group blocking the N-terminus of the alpha chain.

It carries out the reaction S-adenosyl-L-methionine + H(+) = S-adenosyl 3-(methylsulfanyl)propylamine + CO2. Its pathway is amine and polyamine biosynthesis; S-adenosylmethioninamine biosynthesis; S-adenosylmethioninamine from S-adenosyl-L-methionine: step 1/1. Catalyzes the decarboxylation of S-adenosylmethionine to S-adenosylmethioninamine (dcAdoMet), the propylamine donor required for the synthesis of the polyamines spermine and spermidine from the diamine putrescine. This Escherichia coli O45:K1 (strain S88 / ExPEC) protein is S-adenosylmethionine decarboxylase proenzyme.